The sequence spans 418 residues: Serine hydroxymethyltransferase (418 aa).

Residues leucine 121 and 125–127 contribute to the (6S)-5,6,7,8-tetrahydrofolate site; that span reads GHL. Position 230 is an N6-(pyridoxal phosphate)lysine (lysine 230). A (6S)-5,6,7,8-tetrahydrofolate-binding site is contributed by 355–357; it reads SPF.

The protein belongs to the SHMT family. As to quaternary structure, homodimer. Pyridoxal 5'-phosphate serves as cofactor.

It is found in the cytoplasm. The catalysed reaction is (6R)-5,10-methylene-5,6,7,8-tetrahydrofolate + glycine + H2O = (6S)-5,6,7,8-tetrahydrofolate + L-serine. Its pathway is one-carbon metabolism; tetrahydrofolate interconversion. It participates in amino-acid biosynthesis; glycine biosynthesis; glycine from L-serine: step 1/1. Functionally, catalyzes the reversible interconversion of serine and glycine with tetrahydrofolate (THF) serving as the one-carbon carrier. This reaction serves as the major source of one-carbon groups required for the biosynthesis of purines, thymidylate, methionine, and other important biomolecules. Also exhibits THF-independent aldolase activity toward beta-hydroxyamino acids, producing glycine and aldehydes, via a retro-aldol mechanism. This chain is Serine hydroxymethyltransferase, found in Streptococcus pyogenes serotype M18 (strain MGAS8232).